A 497-amino-acid polypeptide reads, in one-letter code: Cytochrome P450 CYP94D108 (497 aa).

Residues 6 to 26 (LLSLALLLLAAAAAAAFVLFP) traverse the membrane as a helical segment. Position 439 (C439) interacts with heme.

The protein belongs to the cytochrome P450 family. Mainly expressed in roots and, at low levels, in leaves, fruits and stems.

The protein resides in the membrane. It functions in the pathway steroid metabolism; cholesterol metabolism. Involved in the biosynthesis of spiroketal steroid and saponin natural products from cholesterol such as diosgenin and analogs (e.g. furostanol and spirostanol), plant defense compounds used as main precursors for the industrial production of steroid hormones. During the 5,6-spiroketalization of cholesterol, may catalyze the 27-monohydroxylation of furostanol-type steroid to an intermediate product that undergoes a stereospecific formation of the terminal heterocycle to yield diosgenin. This Paris polyphylla (Daiswa polyphylla) protein is Cytochrome P450 CYP94D108.